An 831-amino-acid chain; its full sequence is Histone acetyltransferase SAS3 (831 aa).

Residues 267–573 form the MYST-type HAT domain; the sequence is VWFSQIEYIV…VKYDKLLWEP (307 aa). Residues 300–325 form a C2HC MYST-type zinc finger; it reads VFICEFCLKYMTSRYTFYRHQLKCLT. At Lys367 the chain carries N6-acetyllysine; by autocatalysis. Acetyl-CoA contacts are provided by residues 419-421 and 426-432; these read ILT and QRKGYGQ. Glu452 serves as the catalytic Proton donor/acceptor. Residue Ser456 coordinates acetyl-CoA. 2 disordered regions span residues 614–639 and 719–813; these read ENYNNSRAHNKRRRRRRRSSEHKTSK and PLGN…SHIR. Over residues 621 to 633 the composition is skewed to basic residues; sequence AHNKRRRRRRRSS. Acidic residues-rich tracts occupy residues 736 to 746 and 755 to 794; these read EQDEVENDVDT and KEDEDEDEDFTLDDDIEDEQISEENDEEEDTYEEDSDDDE. Residues 795-812 are compositionally biased toward basic and acidic residues; that stretch reads DGKRKGQEQDENDIESHI.

This sequence belongs to the MYST (SAS/MOZ) family. As to quaternary structure, component of the NuA3 histone acetyltransferase (HAT) complex. The NuA3 HAT complex has 2 functionally distinct forms that participate in transcription. The NuA3a HAT complex is composed of at least NTO1, SAS3, TAF14, YNG1 and EAF6. The NuA3b HAT complex contains an additional subunit, PDP3. SAS3 interacts with CDC68/SPT16. In terms of processing, autoacetylation at Lys-367 is required for proper function.

It is found in the nucleus. It catalyses the reaction L-lysyl-[protein] + acetyl-CoA = N(6)-acetyl-L-lysyl-[protein] + CoA + H(+). In terms of biological role, catalytic component of the NuA3 histone acetyltransferase complex, that acetylates H3K14. The NuA3 HAT complex has 2 functionally distinct forms. NuA3a binds H3K4me3, through the PHD finger of YNG1, and acetylates H3K14 at the promoter region of actively transcribed genes to promote transcription initiation. NuA3b binds H3K36me3 at the coding regions of actively transcribed genes, through the PWWP domain of PDP3, and coordinates transcription elongation. In vitro, SAS3 acetylates free histones H3 and H4. It is involved in silencing the HMR locus. This is Histone acetyltransferase SAS3 from Saccharomyces cerevisiae (strain ATCC 204508 / S288c) (Baker's yeast).